A 373-amino-acid polypeptide reads, in one-letter code: MTDNSKIRVVVGMSGGVDSSVTALLLKEQGYDVIGVFMKNWDDTDEFGVCTATEDYKDVAAVADQIGIPYYSVNFEKEYWDRVFEYFLAEYRAGRTPNPDVMCNKEIKFKAFLDYAMTLGADYVATGHYAQVKRDENGTVHMLRGADNGKDQTYFLSQLSQEQLQKTLFPLGHLQKSEVREIAERAGLATAKKKDSTGICFIGEKNFKQFLSQYLPAQKGRMMTIDGRDMGEHAGLMYYTIGQRGGLGIGGQHGGDNQPWFVVGKDLSQNILYVGQGFYHEALMSNSLDASVIHFTREMPEEFTFECTAKFRYRQPDSHVAVHVRGDKAEVVFAEPQRAITPGQAVVFYDGKECLGGGMIDMAYKNGQPCQYI.

ATP-binding positions include 12–19 (GMSGGVDS) and methionine 38. The interval 98–100 (NPD) is interaction with target base in tRNA. The Nucleophile role is filled by cysteine 103. A disulfide bridge links cysteine 103 with cysteine 200. ATP is bound at residue glycine 127. Residues 150–152 (KDQ) are interaction with tRNA. Cysteine 200 acts as the Cysteine persulfide intermediate in catalysis. Residues 312 to 313 (RY) form an interaction with tRNA region.

It belongs to the MnmA/TRMU family.

The protein localises to the cytoplasm. It carries out the reaction S-sulfanyl-L-cysteinyl-[protein] + uridine(34) in tRNA + AH2 + ATP = 2-thiouridine(34) in tRNA + L-cysteinyl-[protein] + A + AMP + diphosphate + H(+). Catalyzes the 2-thiolation of uridine at the wobble position (U34) of tRNA, leading to the formation of s(2)U34. The chain is tRNA-specific 2-thiouridylase MnmA from Streptococcus pyogenes serotype M28 (strain MGAS6180).